The chain runs to 477 residues: PTS system glucose-specific EIICB component (477 aa).

The Cytoplasmic portion of the chain corresponds to 1 to 14 (MFKNAFANLQKVGK). One can recognise a PTS EIIC type-1 domain in the interval 1–388 (MFKNAFANLQ…LDLKTPGRED (388 aa)). The helical transmembrane segment at 15–35 (SLMLPVSVLPIAGILLGVGSA) threads the bilayer. At 36-50 (NFSWLPAVVSHVMAE) the chain is on the periplasmic side. A helical membrane pass occupies residues 51–71 (AGGSVFANMPLIFAIGVALGF). Residues 72–79 (TNNDGVSA) are Cytoplasmic-facing. The chain crosses the membrane as a helical span at residues 80-100 (LAAVVAYGIMVKTMAVVAPLV). The Periplasmic segment spans residues 101–111 (LHLPAEEIASK). A helical membrane pass occupies residues 112–132 (HLADTGVLGGIISGAIAAYMF). Over 133 to 151 (NRFYRIKLPEYLGFFAGKR) the chain is Cytoplasmic. The helical transmembrane segment at 152-172 (FVPIISGLAAIFTGVVLSFIW) threads the bilayer. The Periplasmic segment spans residues 173–190 (PPIGSAIQTFSQWAAYQN). A helical transmembrane segment spans residues 191 to 211 (PVVAFGIYGFIERCLVPFGLH). Topologically, residues 212 to 249 (HIWNVPFQMQIGEYTNAAGQVFHGDIPRYMAGDPTAGK) are cytoplasmic. Residues 250 to 270 (LSGGFLFKMYGLPAAAIAIWH) traverse the membrane as a helical segment. The Periplasmic portion of the chain corresponds to 271–279 (SAKPENRAK). Residues 280-300 (VGGIMISAALTSFLTGITEPI) form a helical membrane-spanning segment. At 301–309 (EFSFMFVAP) the chain is on the cytoplasmic side. A helical transmembrane segment spans residues 310–330 (ILYIIHAILAGLAFPICILLG). Residues 331–355 (MRDGTSFSHGLIDFIVLSGNSSKLW) are Periplasmic-facing. A helical transmembrane segment spans residues 356 to 376 (LFPIVGIGYAIVYYTIFRVLI). At 377–477 (KALDLKTPGR…TEMDEYIRNH (101 aa)) the chain is on the cytoplasmic side. One can recognise a PTS EIIB type-1 domain in the interval 399 to 477 (SEMAPALVAA…TEMDEYIRNH (79 aa)). The active-site Phosphocysteinsyse intermediate; for EIIB activity is the cysteine 421. Cysteine 421 is modified (phosphocysteine).

Its subcellular location is the cell inner membrane. It catalyses the reaction N(pros)-phospho-L-histidyl-[protein] + D-glucose(out) = D-glucose 6-phosphate(in) + L-histidyl-[protein]. Functionally, the phosphoenolpyruvate-dependent sugar phosphotransferase system (sugar PTS), a major carbohydrate active transport system, catalyzes the phosphorylation of incoming sugar substrates concomitantly with their translocation across the cell membrane. The enzyme II complex composed of PtsG and Crr is involved in glucose transport. Also functions as a chemoreceptor monitoring the environment for changes in sugar concentration. This chain is PTS system glucose-specific EIICB component (ptsG), found in Escherichia coli O6:H1 (strain CFT073 / ATCC 700928 / UPEC).